A 372-amino-acid chain; its full sequence is MSVTLHLRGETKPLEHRAALTPTTVKHLIGKGFKIYVEESPQSIFKIDEYRRAGAIIVPFGSWISAPRDRIIIGLKEMPEEDKFPLVHEHIQFAHCYKDQAGWKDVLRRFINGNGTLYDLEFLEDDNGRRVAAFGFYAGFAGAALGLADWAFKQTHKDSEDLPAVSPYPNEKALIKDIGKAYKNALKTGAKKPKVLIIGALGRCGSGAIDFLKKVGLPEENIIKWDIQETSRGGPFPEIAASDIFINCIYLSKPIAPFINYELLNKPDRKLRTVVDVSADTTNPHNPIPIYNIATVFNKPTVKVNTSSGPKLSVISIDHLPSLLPREASEFFAHDLLPSLEQLPSRHVSPVWVRAEKLFNRHSARAIRESKL.

Positions 17 and 76 each coordinate L-saccharopine. Lys76 (proton acceptor) is an active-site residue. The Proton donor role is filled by His95. Residue Gln100 coordinates L-saccharopine. Position 129 (Arg129) interacts with NAD(+). The L-saccharopine site is built by Arg130 and Phe134. Residues 202-203 (GR), Asp226, Thr230, Tyr250, and Val277 contribute to the NAD(+) site. A disulfide bond links Cys204 and Cys248. L-saccharopine is bound at residue 278–280 (SAD). Position 317–320 (317–320 (IDHL)) interacts with NAD(+). Positions 370 to 372 (SKL) match the Microbody targeting signal motif.

This sequence belongs to the AlaDH/PNT family. Monomer.

The protein localises to the peroxisome. It carries out the reaction L-saccharopine + NAD(+) + H2O = L-lysine + 2-oxoglutarate + NADH + H(+). It participates in amino-acid biosynthesis; L-lysine biosynthesis via AAA pathway; L-lysine from L-alpha-aminoadipate (fungal route): step 3/3. Its function is as follows. Catalyzes the NAD(+)-dependent cleavage of saccharopine to L-lysine and 2-oxoglutarate, the final step in the alpha-aminoadipate (AAA) pathway for lysin biosynthesis. This is Saccharopine dehydrogenase [NAD(+), L-lysine-forming] (LYS1) from Candida glabrata (strain ATCC 2001 / BCRC 20586 / JCM 3761 / NBRC 0622 / NRRL Y-65 / CBS 138) (Yeast).